An 88-amino-acid chain; its full sequence is Alpha-latrotoxin associated low molecular weight protein (88 aa).

The N-terminal stretch at 1 to 18 is a signal peptide; sequence MSKLFFVAFLCLIISVFA.

Belongs to the arthropod CHH/MIH/GIH/VIH hormone family. Expressed by the venom gland.

The protein localises to the secreted. Its function is as follows. May increase the toxicity of alpha-latrotoxin and/or other venom components. Is non-toxic to mice and to the cockroach Periplaneta americana. The protein is Alpha-latrotoxin associated low molecular weight protein of Latrodectus hesperus (Western black widow spider).